The following is a 274-amino-acid chain: 2-dehydro-3-deoxyphosphooctonate aldolase (274 aa).

Belongs to the KdsA family.

The protein resides in the cytoplasm. It catalyses the reaction D-arabinose 5-phosphate + phosphoenolpyruvate + H2O = 3-deoxy-alpha-D-manno-2-octulosonate-8-phosphate + phosphate. The protein operates within carbohydrate biosynthesis; 3-deoxy-D-manno-octulosonate biosynthesis; 3-deoxy-D-manno-octulosonate from D-ribulose 5-phosphate: step 2/3. It participates in bacterial outer membrane biogenesis; lipopolysaccharide biosynthesis. This is 2-dehydro-3-deoxyphosphooctonate aldolase from Rickettsia bellii (strain OSU 85-389).